A 516-amino-acid polypeptide reads, in one-letter code: 2-isopropylmalate synthase (516 aa).

Positions 10–271 constitute a Pyruvate carboxyltransferase domain; the sequence is IRIFDTTLRD…TTGIDTRELA (262 aa). Asp19, His205, His207, and Asn241 together coordinate Mn(2+). Residues 396-516 form a regulatory domain region; it reads ELVSFRVEAG…REKASNRETP (121 aa).

Belongs to the alpha-IPM synthase/homocitrate synthase family. LeuA type 1 subfamily. In terms of assembly, homodimer. Mn(2+) is required as a cofactor.

It is found in the cytoplasm. It catalyses the reaction 3-methyl-2-oxobutanoate + acetyl-CoA + H2O = (2S)-2-isopropylmalate + CoA + H(+). It functions in the pathway amino-acid biosynthesis; L-leucine biosynthesis; L-leucine from 3-methyl-2-oxobutanoate: step 1/4. Its function is as follows. Catalyzes the condensation of the acetyl group of acetyl-CoA with 3-methyl-2-oxobutanoate (2-ketoisovalerate) to form 3-carboxy-3-hydroxy-4-methylpentanoate (2-isopropylmalate). This Acidimicrobium ferrooxidans (strain DSM 10331 / JCM 15462 / NBRC 103882 / ICP) protein is 2-isopropylmalate synthase.